A 613-amino-acid polypeptide reads, in one-letter code: Na(+)/H(+) antiporter NhaA 1 (613 aa).

The segment at 1–24 (MTEASARTIGPLPSRFSRDPKTPR) is disordered. Residues 1 to 408 (MTEASARTIG…DPARQDEARV (408 aa)) are na(+)/H(+) antiporter NhaA. A run of 11 helical transmembrane segments spans residues 29–49 (AAAALLLAFTVLAILWANSPW), 81–101 (GLMAFFFFIVGLEVKSEFVIG), 110–130 (AVPVVAAIAGLIVPAVIFLTF), 138–158 (QAWGVVISTDTAFLVGALAVI), 168–188 (IFLLTLAVVDDVGALGAIALF), 191–211 (DDLKLAPLAVAALLIAALAMV), 231–251 (IALYLAHVHPTLAGVAVAVLI), 300–320 (AVGPYVSFVVLPIFALANAGV), 337–357 (WGIVAGLVVGKFVGITAATAL), 377–397 (GGAALSGIGFTISLFIVDVAI), and 408–428 (VGVLIASVLAFTLSWALFRIT). Residues 409 to 613 (GVLIASVLAF…SLIRALEAGR (205 aa)) form the Thioredoxin domain.

The protein in the N-terminal section; belongs to the NhaA Na(+)/H(+) (TC 2.A.33) antiporter family.

The protein localises to the cell membrane. The catalysed reaction is Na(+)(in) + 2 H(+)(out) = Na(+)(out) + 2 H(+)(in). Its function is as follows. Na(+)/H(+) antiporter that extrudes sodium in exchange for external protons. The protein is Na(+)/H(+) antiporter NhaA 1 of Mycobacterium sp. (strain JLS).